The following is a 156-amino-acid chain: MNLNATLFAQMVVFLILAWFTMKFVWPPLINALDERSKKIADGLSAAEKGKAELEAAHKRVDQELAQARNDGQQRVADAEKRAVAVADEIKAQAQAEAARIIAQAKADAEQQVVKARETLRGEVAALAVKGAEQILKREVDQAAHADLLNQLKAEL.

Residues 7–27 (LFAQMVVFLILAWFTMKFVWP) traverse the membrane as a helical segment.

It belongs to the ATPase B chain family. In terms of assembly, F-type ATPases have 2 components, F(1) - the catalytic core - and F(0) - the membrane proton channel. F(1) has five subunits: alpha(3), beta(3), gamma(1), delta(1), epsilon(1). F(0) has three main subunits: a(1), b(2) and c(10-14). The alpha and beta chains form an alternating ring which encloses part of the gamma chain. F(1) is attached to F(0) by a central stalk formed by the gamma and epsilon chains, while a peripheral stalk is formed by the delta and b chains.

The protein resides in the cell inner membrane. Functionally, f(1)F(0) ATP synthase produces ATP from ADP in the presence of a proton or sodium gradient. F-type ATPases consist of two structural domains, F(1) containing the extramembraneous catalytic core and F(0) containing the membrane proton channel, linked together by a central stalk and a peripheral stalk. During catalysis, ATP synthesis in the catalytic domain of F(1) is coupled via a rotary mechanism of the central stalk subunits to proton translocation. Component of the F(0) channel, it forms part of the peripheral stalk, linking F(1) to F(0). The protein is ATP synthase subunit b of Paraburkholderia xenovorans (strain LB400).